We begin with the raw amino-acid sequence, 269 residues long: Formamidopyrimidine-DNA glycosylase (269 aa).

The Schiff-base intermediate with DNA role is filled by Pro-2. Glu-3 functions as the Proton donor in the catalytic mechanism. Residue Lys-57 is the Proton donor; for beta-elimination activity of the active site. Residues His-90, Arg-109, and Lys-150 each contribute to the DNA site. Residues 235–269 form an FPG-type zinc finger; sequence QVYGRKGEPCRVCGTPIVATKHAQRATFYCRQCQK. The Proton donor; for delta-elimination activity role is filled by Arg-259.

It belongs to the FPG family. As to quaternary structure, monomer. The cofactor is Zn(2+).

The enzyme catalyses Hydrolysis of DNA containing ring-opened 7-methylguanine residues, releasing 2,6-diamino-4-hydroxy-5-(N-methyl)formamidopyrimidine.. The catalysed reaction is 2'-deoxyribonucleotide-(2'-deoxyribose 5'-phosphate)-2'-deoxyribonucleotide-DNA = a 3'-end 2'-deoxyribonucleotide-(2,3-dehydro-2,3-deoxyribose 5'-phosphate)-DNA + a 5'-end 5'-phospho-2'-deoxyribonucleoside-DNA + H(+). In terms of biological role, involved in base excision repair of DNA damaged by oxidation or by mutagenic agents. Acts as a DNA glycosylase that recognizes and removes damaged bases. Has a preference for oxidized purines, such as 7,8-dihydro-8-oxoguanine (8-oxoG). Has AP (apurinic/apyrimidinic) lyase activity and introduces nicks in the DNA strand. Cleaves the DNA backbone by beta-delta elimination to generate a single-strand break at the site of the removed base with both 3'- and 5'-phosphates. In Escherichia coli (strain K12 / MC4100 / BW2952), this protein is Formamidopyrimidine-DNA glycosylase.